A 393-amino-acid polypeptide reads, in one-letter code: Putative odorant receptor 69a, isoform A (393 aa).

Topologically, residues 1–39 (MQLHDHMKYIDLGCKMACIPRYQWKGRPTERQFYASEQR) are cytoplasmic. The helical transmembrane segment at 40-60 (IVFLLGTICQIFQITGVLIYW) threads the bilayer. Residues 61–76 (YCNGRLATETGTFVAQ) are Extracellular-facing. A helical transmembrane segment spans residues 77 to 97 (LSEMCSSFCLTFVGFCNVYAI). Over 98 to 139 (STNRNQIETLLEELHQIYPRYRKNHYRCQHYFDMAMTIMRIE) the chain is Cytoplasmic. A helical transmembrane segment spans residues 140–160 (FLFYMILYVYYNSAPLWVLLW). At 161-189 (EHLHEEYDLSFKTQTNTWFPWKVHGSALG) the chain is on the extracellular side. The chain crosses the membrane as a helical span at residues 190–210 (FGMAVLSITVGSFVGVGFSIV). Residues 211 to 269 (TQNLICLLTFQLKLHYDGISSQLVSLDCRRPGAHKELSILIAHHSRILQLGDQVNDIMN) lie on the Cytoplasmic side of the membrane. A helical membrane pass occupies residues 270–290 (FVFGSSLVGATIAICMSSVSI). The Extracellular portion of the chain corresponds to 291 to 304 (MLLDLASAFKYASG). Residues 305–325 (LVAFVLYNFVICYMGTEVTLA) traverse the membrane as a helical segment. Over 326–365 (SGKVLPAAFYNNWYEGDLVYRRMLLILMMRATKPYMWKTY) the chain is Cytoplasmic. The helical transmembrane segment at 366–386 (KLAPVSITTYMATLKFSYQMF) threads the bilayer. The Extracellular segment spans residues 387–393 (TCVRSLK).

The protein belongs to the insect chemoreceptor superfamily. Heteromeric odorant receptor channel (TC 1.A.69) family. Or49a subfamily. Interacts with Orco. Complexes exist early in the endomembrane system in olfactory sensory neurons (OSNs), coupling these complexes to the conserved ciliary trafficking pathway. In terms of tissue distribution, expressed in olfactory sensory neurons in the antenna.

It is found in the cell membrane. Its function is as follows. Odorant receptor which mediates acceptance or avoidance behavior, depending on its substrates. The odorant receptor repertoire encodes a large collection of odor stimuli that vary widely in identity, intensity, and duration. May form a complex with Orco to form odorant-sensing units, providing sensitive and prolonged odorant signaling and calcium permeability. This chain is Putative odorant receptor 69a, isoform A (Or69a), found in Drosophila melanogaster (Fruit fly).